Here is a 433-residue protein sequence, read N- to C-terminus: Steroid hormone receptor ERR2 (433 aa).

Positions 1 to 38 (MSSEDRHLGSSCGSFIKTEPSSPSSGIDALSHHSPSGS) are disordered. Positions 93 to 211 (YMLNAIPKRL…SPPAKKPLTK (119 aa)) are interaction with NANOG. Residues 100 to 186 (KRLCLVCGDI…RVRGGRQKYK (87 aa)) constitute a DNA-binding region (nuclear receptor). 2 NR C4-type zinc fingers span residues 103-123 (CLVC…CEAC) and 139-163 (CPAT…FMKC). The tract at residues 203–433 (PPAKKPLTKI…LFLEMLEAKV (231 aa)) is essential for ESRRB transcriptional activity and interaction with NCOA3. Positions 208–432 (PLTKIVSNLL…KLFLEMLEAK (225 aa)) constitute an NR LBD domain.

Belongs to the nuclear hormone receptor family. NR3 subfamily. As to quaternary structure, binds DNA as a monomer. Interacts with NR0B1; represses ESRRB activity at the GATA6 promoter. Interacts with NANOG; reciprocally modulates their transcriptional activities and activates POU5F1 expression. Interacts with NCOA3; mediates the interaction between ESRRB and RNA polymerase II complexes and allows NCOA3 corecruitment to ESRRB, KLF4, NANOG, and SOX2 enhancer regions to trigger ESRRB-dependent gene activation involved in self-renewal and pluripotency. Interacts with KDM1A; co-occupes the core set of ESRRB targets including ELF5 and EOMES. Interacts with the multiprotein complex Integrator, at least composed of INTS1, INTS2, INTS3, INTS4, INTS5, INTS6, INTS7, INTS8, INTS9/RC74, INTS10, INTS11/CPSF3L and INTS12; ESRRB is probably not a core component of the integrator complex and associates to integrator via its interaction with INTS1 and INTS9; attracts the transcriptional machinery. Interacts with JARID2. Interacts with POU5F1; recruits ESRRB near the POU5F1-SOX2 element in the NANOG proximal promoter leading to activation of NANOG expression; the interaction is DNA independent. Post-translationally, acetylated by PCAF/KAT2 (in vitro). As to expression, highly expressed in undifferentiated ESCs. Expressed in immature horizontal cells and in rod photoreceptors at intermediate and late stages of differentiation. Expressed in endolymph-producing epithelial cells.

The protein localises to the nucleus. Its subcellular location is the cytoplasm. It localises to the chromosome. Functionally, transcription factor that binds a canonical ESRRB recognition (ERRE) sequence 5'TCAAGGTCA-3' localized on promoter and enhancer of targets genes regulating their expression or their transcriptional activity. Plays a role, in a LIF-independent manner, in maintainance of self-renewal and pluripotency of embryonic and trophoblast stem cells through different signaling pathways including FGF signaling pathway and Wnt signaling pathways. Involved in morula development (2-16 cells embryos) by acting as a regulator at the 8-cell stage. Upon FGF signaling pathway activation, interacts with KDM1A by directly binding to enhancer site of ELF5 and EOMES and activating their transcription leading to self-renewal of trophoblast stem cells. Also regulates expression of multiple rod-specific genes and is required for survival of this cell type. Plays a role as transcription factor activator of GATA6, NR0B1, POU5F1 and PERM1. Plays a role as transcription factor repressor of NFE2L2 transcriptional activity and ESR1 transcriptional activity. During mitosis remains bound to a subset of interphase target genes, including pluripotency regulators, through the canonical ESRRB recognition (ERRE) sequence, leading to their transcriptional activation in early G1 phase. Can coassemble on structured DNA elements with other transcription factors like SOX2, POU5F1, KDM1A and NCOA3 to trigger ESRRB-dependent gene activation. This mechanism, in the case of SOX2 corecruitment prevents the embryonic stem cells (ESCs) to epiblast stem cells (EpiSC) transition through positive regulation of NR0B1 that inhibits the EpiSC transcriptional program. Also plays a role inner ear development by controlling expression of ion channels and transporters and in early placentation. The protein is Steroid hormone receptor ERR2 of Mus musculus (Mouse).